Consider the following 391-residue polypeptide: tRNA-specific 2-thiouridylase MnmA (391 aa).

Residues 9–16 and M35 contribute to the ATP site; that span reads GMSGGVDS. Positions 95-97 are interaction with target base in tRNA; it reads NPD. The Nucleophile role is filled by C100. Residues C100 and C196 are joined by a disulfide bond. G124 contacts ATP. The tract at residues 146-148 is interaction with tRNA; it reads KDQ. The active-site Cysteine persulfide intermediate is C196. An interaction with tRNA region spans residues 308-309; that stretch reads RY.

It belongs to the MnmA/TRMU family.

The protein localises to the cytoplasm. It catalyses the reaction S-sulfanyl-L-cysteinyl-[protein] + uridine(34) in tRNA + AH2 + ATP = 2-thiouridine(34) in tRNA + L-cysteinyl-[protein] + A + AMP + diphosphate + H(+). Its function is as follows. Catalyzes the 2-thiolation of uridine at the wobble position (U34) of tRNA, leading to the formation of s(2)U34. This chain is tRNA-specific 2-thiouridylase MnmA, found in Burkholderia cenocepacia (strain HI2424).